The primary structure comprises 244 residues: 3-deoxy-manno-octulosonate cytidylyltransferase (244 aa).

Belongs to the KdsB family.

It is found in the cytoplasm. It catalyses the reaction 3-deoxy-alpha-D-manno-oct-2-ulosonate + CTP = CMP-3-deoxy-beta-D-manno-octulosonate + diphosphate. It participates in nucleotide-sugar biosynthesis; CMP-3-deoxy-D-manno-octulosonate biosynthesis; CMP-3-deoxy-D-manno-octulosonate from 3-deoxy-D-manno-octulosonate and CTP: step 1/1. The protein operates within bacterial outer membrane biogenesis; lipopolysaccharide biosynthesis. Its function is as follows. Activates KDO (a required 8-carbon sugar) for incorporation into bacterial lipopolysaccharide in Gram-negative bacteria. The polypeptide is 3-deoxy-manno-octulosonate cytidylyltransferase (Rickettsia bellii (strain OSU 85-389)).